Here is a 333-residue protein sequence, read N- to C-terminus: uncharacterized protein (333 aa).

The 208-residue stretch at 67 to 274 (HFYPTTQVVS…LEMARNLAIE (208 aa)) folds into the Radical SAM core domain. 3 residues coordinate [4Fe-4S] cluster: cysteine 82, cysteine 86, and cysteine 89.

Requires [4Fe-4S] cluster as cofactor.

This is an uncharacterized protein from Methanocaldococcus jannaschii (strain ATCC 43067 / DSM 2661 / JAL-1 / JCM 10045 / NBRC 100440) (Methanococcus jannaschii).